We begin with the raw amino-acid sequence, 204 residues long: Carbon disulfide hydrolase (204 aa).

Residues Cys35, His88, and Cys91 each coordinate Zn(2+).

It belongs to the beta-class carbonic anhydrase family. In terms of assembly, forms a hexadecameric catenane homooligomer, through interactions of two interlocked octameric rings. Exists as both octamers and hexadecamers in solution. Zn(2+) serves as cofactor.

The catalysed reaction is carbon disulfide + 2 H2O = 2 hydrogen sulfide + CO2 + 2 H(+). It participates in sulfur metabolism; hydrogen sulfide biosynthesis. In terms of biological role, catalyzes the conversion of carbon disulfide into hydrogen sulfide and carbon dioxide, with carbonyl sulfide as an intermediate. Likely plays a key role in sulfur metabolism that allows Acidianus sp. A1-3 to grow on carbon disulfide as the main carbon and energy source. Does not show carbonic anhydrase activity (hydration of CO(2) to carbonate). This is Carbon disulfide hydrolase from Acidianus sp. (strain A1-3).